We begin with the raw amino-acid sequence, 332 residues long: Ketol-acid reductoisomerase (NADP(+)) 1 (332 aa).

Residues 2–182 (AELFYDADAD…GGTRAGVIKT (181 aa)) form the KARI N-terminal Rossmann domain. NADP(+) is bound by residues 25-28 (YGSQ), serine 51, serine 53, and 83-86 (DPIQ). Histidine 108 is a catalytic residue. Glycine 134 is a binding site for NADP(+). Residues 183–328 (TFTEETETDL…KELRKLMSWV (146 aa)) form the KARI C-terminal knotted domain. Positions 191, 195, 227, and 231 each coordinate Mg(2+). Residue serine 252 participates in substrate binding.

The protein belongs to the ketol-acid reductoisomerase family. Requires Mg(2+) as cofactor.

It catalyses the reaction (2R)-2,3-dihydroxy-3-methylbutanoate + NADP(+) = (2S)-2-acetolactate + NADPH + H(+). The catalysed reaction is (2R,3R)-2,3-dihydroxy-3-methylpentanoate + NADP(+) = (S)-2-ethyl-2-hydroxy-3-oxobutanoate + NADPH + H(+). It participates in amino-acid biosynthesis; L-isoleucine biosynthesis; L-isoleucine from 2-oxobutanoate: step 2/4. Its pathway is amino-acid biosynthesis; L-valine biosynthesis; L-valine from pyruvate: step 2/4. In terms of biological role, involved in the biosynthesis of branched-chain amino acids (BCAA). Catalyzes an alkyl-migration followed by a ketol-acid reduction of (S)-2-acetolactate (S2AL) to yield (R)-2,3-dihydroxy-isovalerate. In the isomerase reaction, S2AL is rearranged via a Mg-dependent methyl migration to produce 3-hydroxy-3-methyl-2-ketobutyrate (HMKB). In the reductase reaction, this 2-ketoacid undergoes a metal-dependent reduction by NADPH to yield (R)-2,3-dihydroxy-isovalerate. This chain is Ketol-acid reductoisomerase (NADP(+)) 1, found in Streptomyces coelicolor (strain ATCC BAA-471 / A3(2) / M145).